A 142-amino-acid polypeptide reads, in one-letter code: Large ribosomal subunit protein uL13 (142 aa).

Belongs to the universal ribosomal protein uL13 family. In terms of assembly, part of the 50S ribosomal subunit.

Functionally, this protein is one of the early assembly proteins of the 50S ribosomal subunit, although it is not seen to bind rRNA by itself. It is important during the early stages of 50S assembly. In Pseudomonas entomophila (strain L48), this protein is Large ribosomal subunit protein uL13.